The sequence spans 919 residues: Envelope glycoprotein B (919 aa).

The signal sequence occupies residues 1–28 (MSKDSTSLGVRTIVIACLVLLGCCIVEA). Topologically, residues 29–788 (VPTTPSSQPS…SGIASFINNP (760 aa)) are virion surface. 5 disulfide bridges follow: Cys81–Cys586, Cys98–Cys542, Cys172–Cys237, Cys330–Cys378, and Cys607–Cys647. A glycan (N-linked (GlcNAc...) asparagine; by host) is linked at Asn106. An involved in fusion and/or binding to host membrane region spans residues 138 to 144 (VWKGYSH). The N-linked (GlcNAc...) asparagine; by host glycan is linked to Asn216. The interval 223–231 (GWMPWRHYT) is involved in fusion and/or binding to host membrane. Asn321, Asn364, Asn438, Asn456, Asn493, Asn496, and Asn499 each carry an N-linked (GlcNAc...) asparagine; by host glycan. N-linked (GlcNAc...) asparagine; by host glycosylation is found at Asn666 and Asn688. Hydrophobic membrane proximal region stretches follow at residues 733-786 (IDSV…SFIN) and 765-785 (TLVL…ASFI). A helical membrane pass occupies residues 789-809 (FGGLAIGLLVIAGLVAAFFAY). Residues 810–919 (RYVMQLRSNP…DDPMESEKMV (110 aa)) are Intravirion-facing. The short motif at 864–867 (YMSM) is the Golgi targeting element. Residues 900-919 (RGPKYTRLREDDPMESEKMV) are disordered. Residues 904–907 (YTRL) carry the Internalization motif motif. Over residues 906-919 (RLREDDPMESEKMV) the composition is skewed to basic and acidic residues.

It belongs to the herpesviridae glycoprotein B family. In terms of assembly, homotrimer; disulfide-linked. Binds to heparan sulfate proteoglycans. Interacts with gH/gL heterodimer. Post-translationally, a proteolytic cleavage by host furin generates two subunits that remain linked by disulfide bonds.

The protein resides in the virion membrane. Its subcellular location is the host cell membrane. It localises to the host endosome membrane. It is found in the host Golgi apparatus membrane. Its function is as follows. Envelope glycoprotein that forms spikes at the surface of virion envelope. Essential for the initial attachment to heparan sulfate moieties of the host cell surface proteoglycans. Involved in fusion of viral and cellular membranes leading to virus entry into the host cell. Following initial binding to its host receptors, membrane fusion is mediated by the fusion machinery composed at least of gB and the heterodimer gH/gL. May be involved in the fusion between the virion envelope and the outer nuclear membrane during virion egress. This is Envelope glycoprotein B from Equus caballus (Horse).